The chain runs to 198 residues: Cell division protein SepF (198 aa).

The disordered stretch occupies residues 170-198 (EVPQPPARPARPASTNPPAWGNETNRMAQ). Residues 179–188 (ARPASTNPPA) are compositionally biased toward low complexity.

The protein belongs to the SepF family. In terms of assembly, homodimer. Interacts with FtsZ.

The protein resides in the cytoplasm. Its function is as follows. Cell division protein that is part of the divisome complex and is recruited early to the Z-ring. Probably stimulates Z-ring formation, perhaps through the cross-linking of FtsZ protofilaments. Its function overlaps with FtsA. The sequence is that of Cell division protein SepF from Trichormus variabilis (strain ATCC 29413 / PCC 7937) (Anabaena variabilis).